The following is a 414-amino-acid chain: O-methyltransferase sirM (414 aa).

Aspartate 270 is an S-adenosyl-L-methionine binding site. Histidine 321 acts as the Proton acceptor in catalysis.

The protein belongs to the class I-like SAM-binding methyltransferase superfamily. Cation-independent O-methyltransferase family. COMT subfamily.

The protein operates within mycotoxin biosynthesis. Its function is as follows. O-methyltransferase; part of the gene cluster that mediates the biosynthesis of sirodesmin PL, an epipolythiodioxopiperazine (ETP) characterized by a disulfide bridged cyclic dipeptide and that acts as a phytotoxin which is involved in the blackleg didease of canola. SirD catalyzes the O-prenylation of L-tyrosine (L-Tyr) in the presence of dimethylallyl diphosphate (DMAPP) to yield 4-O-dimethylallyl-L-Tyr, and therefore represents probably the first pathway-specific enzyme in the biosynthesis of sirodesmin PL. 4-O-dimethylallyl-L-Tyr, then undergoes condensation with L-Ser in a reaction catalyzed by the non-ribosomal peptide synthase sirP to form the diketopiperazine (DKP) backbone. Further bishydroxylation of the DKP performed by the cytochrome P450 monooxygenase sirC leads to the production of the intermediate phomamide. This step is essential to form the reactive thiol group required for toxicity of sirodesmin PL. The next steps of sirodesmin biosynthesis are not well understood yet, but some predictions could be made from intermediate compounds identification. Phomamide is converted into phomalizarine via oxidation, probably by sirT. Further oxidation, methylation (by sirM or sirN) and reduction steps convert phomalizarine to deacetyl sirodesmin. Finally, acetyltransferase sirH probably acetylates deacetyl sirodesmin to produce sirodesmin PL. The sequence is that of O-methyltransferase sirM from Leptosphaeria maculans (Blackleg fungus).